The primary structure comprises 346 residues: MALLLPLAVLLAACRPGHGFSGGCDTCGLRPVAYHYGGMRVVGGTEALHGSWPWIVSIQNPRFAGTGHMCGGSLITPQWVLSAAHCFGRPNYILQSRVVIGANDLTQLGQEVEVRSIRRAILHEYFNNKTMINDIALLELDRPVHCSYYIQLACVPDPSLRVSELTDCYVSGWGHMGMRSAAPTQTAEVLQEAKVHLLDLNLCNSSHWYDGVLHSHNLCAGYPQGGIDTCQGDSGGPLMCRDSSADYFWLVGVTSWGRGCGRAFRPGIYTSTQHFYNWILLQVRAAAHPTSRTWSHYMSTSSYHHGPNAVPTQPSVSDSCPFPAQKLREFFTGVQNLLQSLWGSKA.

Residues 1–19 form the signal peptide; that stretch reads MALLLPLAVLLAACRPGHG. Disulfide bonds link Cys-24/Cys-146, Cys-27/Cys-154, Cys-70/Cys-86, Cys-168/Cys-240, Cys-203/Cys-219, and Cys-230/Cys-260. Residues 41–284 form the Peptidase S1 domain; that stretch reads VVGGTEALHG…FYNWILLQVR (244 aa). The Charge relay system role is filled by His-85. Residue Asn-128 is glycosylated (N-linked (GlcNAc...) asparagine). Catalysis depends on Asp-134, which acts as the Charge relay system. Asn-204 carries N-linked (GlcNAc...) asparagine glycosylation. Residue Ser-234 is the Charge relay system of the active site. Residues 266–346 constitute a propeptide that is removed on maturation; it reads PGIYTSTQHF…LLQSLWGSKA (81 aa).

This sequence belongs to the peptidase S1 family. As to quaternary structure, heavy chain (catalytic) and a light chain linked by two disulfide bonds. In terms of processing, glycosylated.

It carries out the reaction Preferential cleavage: Arg-|-Xaa, Lys-|-Xaa.. With respect to regulation, inhibited by aprotinin, ovomucoid, soybean trypsin inhibitor, benzamidine, p-aminobenzamidine, and zinc ions. Activity also inhibited by a Kazal-type proteinase inhibitor. In terms of biological role, serine protease of trypsin-like cleavage specificity. Synthesized in a zymogen form, proacrosin and stored in the acrosome. This chain is Acrosin, found in Meleagris gallopavo (Wild turkey).